We begin with the raw amino-acid sequence, 542 residues long: Chaperonin GroEL (542 aa).

ATP-binding positions include 29–32 (TLGP), 86–90 (DGTTT), G413, 477–479 (NAA), and D493.

This sequence belongs to the chaperonin (HSP60) family. Forms a cylinder of 14 subunits composed of two heptameric rings stacked back-to-back. Interacts with the co-chaperonin GroES.

It is found in the cytoplasm. It catalyses the reaction ATP + H2O + a folded polypeptide = ADP + phosphate + an unfolded polypeptide.. Its function is as follows. Together with its co-chaperonin GroES, plays an essential role in assisting protein folding. The GroEL-GroES system forms a nano-cage that allows encapsulation of the non-native substrate proteins and provides a physical environment optimized to promote and accelerate protein folding. This is Chaperonin GroEL from Heliobacterium modesticaldum (strain ATCC 51547 / Ice1).